The chain runs to 155 residues: 1,4-dihydroxy-2-naphthoyl-CoA hydrolase (155 aa).

The active site involves Asp-27.

Belongs to the 4-hydroxybenzoyl-CoA thioesterase family. DHNA-CoA hydrolase subfamily.

The catalysed reaction is 1,4-dihydroxy-2-naphthoyl-CoA + H2O = 1,4-dihydroxy-2-naphthoate + CoA + H(+). It functions in the pathway cofactor biosynthesis; phylloquinone biosynthesis. The protein operates within quinol/quinone metabolism; 1,4-dihydroxy-2-naphthoate biosynthesis; 1,4-dihydroxy-2-naphthoate from chorismate: step 7/7. Catalyzes the hydrolysis of 1,4-dihydroxy-2-naphthoyl-CoA (DHNA-CoA) to 1,4-dihydroxy-2-naphthoate (DHNA), a reaction involved in phylloquinone (vitamin K1) biosynthesis. In Prochlorococcus marinus (strain NATL2A), this protein is 1,4-dihydroxy-2-naphthoyl-CoA hydrolase.